Consider the following 129-residue polypeptide: Small ribosomal subunit protein uS11 (129 aa).

This sequence belongs to the universal ribosomal protein uS11 family. Part of the 30S ribosomal subunit. Interacts with proteins S7 and S18. Binds to IF-3.

In terms of biological role, located on the platform of the 30S subunit, it bridges several disparate RNA helices of the 16S rRNA. Forms part of the Shine-Dalgarno cleft in the 70S ribosome. This is Small ribosomal subunit protein uS11 from Yersinia pseudotuberculosis serotype O:1b (strain IP 31758).